Here is a 683-residue protein sequence, read N- to C-terminus: Acyl-CoA synthetase short-chain family member 3, mitochondrial (683 aa).

The transit peptide at M1 to G29 directs the protein to the mitochondrion. E223 to R226 lines the CoA pocket. ATP-binding positions include G421 to R423 and D442 to T447. N6-succinyllysine is present on K514. Residue K520 is modified to N6-acetyllysine. ATP is bound by residues D535, R550, and R561. R620 contacts CoA.

It belongs to the ATP-dependent AMP-binding enzyme family. In terms of tissue distribution, expressed in a wide range of tissues, with the highest levels observed in the liver followed by kidney.

Its subcellular location is the mitochondrion matrix. The catalysed reaction is acetate + ATP + CoA = acetyl-CoA + AMP + diphosphate. It catalyses the reaction propanoate + ATP + CoA = propanoyl-CoA + AMP + diphosphate. It carries out the reaction butanoate + ATP + CoA = butanoyl-CoA + AMP + diphosphate. Catalyzes the synthesis of acetyl-CoA from short-chain fatty acids. Propionate is the preferred substrate but can also utilize acetate and butyrate with a much lower affinity. In Rattus norvegicus (Rat), this protein is Acyl-CoA synthetase short-chain family member 3, mitochondrial (Acss3).